The following is a 103-amino-acid chain: Viscotoxin-B (103 aa).

Positions 1–6 are cleaved as a signal peptide; it reads FRNVES. Disulfide bonds link Cys9–Cys46, Cys10–Cys38, and Cys22–Cys32. Residues 53-103 constitute a propeptide, acidic domain; it reads FYCTLGCQSSKCASITTPPNSEVDAEAVRCKAACSNLCDFGVTTNQEIQDD.

This sequence belongs to the plant thionin (TC 1.C.44) family.

The protein localises to the secreted. Thionins are small plant proteins which are toxic to animal cells. They seem to exert their toxic effect at the level of the cell membrane. Their precise function is not known. This Viscum album (European mistletoe) protein is Viscotoxin-B (THI2.2).